The chain runs to 1104 residues: Extended synaptotagmin-1 (1104 aa).

An N-acetylmethionine modification is found at methionine 1. Over 1 to 38 (MERSPGEGPSPSPTDQPSAPSDPTGQPPAAHAKPDPGS) the chain is Cytoplasmic. Residues 1–47 (MERSPGEGPSPSPTDQPSAPSDPTGQPPAAHAKPDPGSGGQPAGPGA) are disordered. Residues 15–24 (DQPSAPSDPT) show a composition bias toward polar residues. Residues 37 to 47 (GSGGQPAGPGA) are compositionally biased toward gly residues. The chain crosses the membrane as a helical span at residues 39–59 (GGQPAGPGAAGEALAVLTSFG). Residues 60–62 (KRL) lie on the Lumenal side of the membrane. A helical transmembrane segment spans residues 63-83 (LVLIPVYLAGAVGLSVGFVLF). Over 84–1104 (GLALYLGWRR…LMDDKDKGSS (1021 aa)) the chain is Cytoplasmic. A coiled-coil region spans residues 91 to 116 (WRRVRDEKERSLRAARQLLDDEEQLT). The 179-residue stretch at 135-313 (DVEKAEWLNK…LPNRLLVPLV (179 aa)) folds into the SMP-LTD domain. C2 domains lie at 312-433 (LVPD…DDWF), 460-580 (QVLQ…QLSS), 627-751 (SVDA…DEWL), and 777-899 (LEEV…TLNS). Phosphoserine; by CDK5 is present on serine 324. Positions 344, 345, 357, 404, 406, 408, 410, and 411 each coordinate Ca(2+). Disordered regions lie at residues 617–641 (VDSE…TPDS), 813–833 (RKGT…TSHK), and 924–950 (SHSY…VTSS). Position 817 is an N6-acetyllysine (lysine 817). Residues serine 820 and serine 941 each carry the phosphoserine modification. Over residues 925–946 (HSYSHSSSSLSEEPELSGGPPH) the composition is skewed to low complexity. Threonine 948 is modified (phosphothreonine). 2 positions are modified to phosphoserine: serine 949 and serine 963. Positions 971–1093 (PLGQVKLTVW…DLSQGVARWY (123 aa)) constitute a C2 5 domain. The residue at position 1009 (tyrosine 1009) is a Phosphotyrosine. A required for phosphatidylinositol 4,5-bisphosphate-dependent location at the cell membrane region spans residues 1018–1025 (KNRGTKRK). The residue at position 1034 (serine 1034) is a Phosphoserine.

This sequence belongs to the extended synaptotagmin family. In terms of assembly, interacts with ESYT2 and ESYT3. Interacts with ADGRD1; inhibiting the G-protein-coupled receptor activity of ADGRD1. Interaction with ADGRD1 is abolished when cytosolic calcium increases, relieving ADGRD1 G-protein-coupled receptor activity. Interacts (phosphorylated form) with SLC2A4. In terms of processing, phosphorylated on Ser residues in insulin-treated adipocytes (in vitro); this promotes interaction with SLC2A4.

It is found in the endoplasmic reticulum membrane. It localises to the cell membrane. Functionally, binds calcium (via the C2 domains) and translocates to sites of contact between the endoplasmic reticulum and the cell membrane in response to increased cytosolic calcium levels. Helps tether the endoplasmic reticulum to the cell membrane and promotes the formation of appositions between the endoplasmic reticulum and the cell membrane. Acts as an inhibitor of ADGRD1 G-protein-coupled receptor activity in absence of cytosolic calcium. Binds glycerophospholipids in a barrel-like domain and may play a role in cellular lipid transport. This is Extended synaptotagmin-1 (ESYT1) from Pongo abelii (Sumatran orangutan).